The following is a 133-amino-acid chain: Small ribosomal subunit protein uS8 (133 aa).

This sequence belongs to the universal ribosomal protein uS8 family. Part of the 30S ribosomal subunit. Contacts proteins S5 and S12.

In terms of biological role, one of the primary rRNA binding proteins, it binds directly to 16S rRNA central domain where it helps coordinate assembly of the platform of the 30S subunit. In Orientia tsutsugamushi (strain Ikeda) (Rickettsia tsutsugamushi), this protein is Small ribosomal subunit protein uS8.